Consider the following 149-residue polypeptide: Calmodulin (149 aa).

At alanine 2 the chain carries N-acetylalanine. EF-hand domains follow at residues 8–43 (EQIA…LGQN), 44–79 (PTEA…KMKD), 81–116 (DSEE…LGEK), and 117–149 (LTDE…MTSK). Ca(2+)-binding residues include aspartate 21, aspartate 23, aspartate 25, threonine 27, glutamate 32, aspartate 57, aspartate 59, aspartate 61, threonine 63, glutamate 68, aspartate 94, aspartate 96, aspartate 98, and glutamate 105. An N6,N6,N6-trimethyllysine modification is found at lysine 116. Ca(2+) contacts are provided by aspartate 130, aspartate 132, aspartate 134, glutamine 136, and glutamate 141.

This sequence belongs to the calmodulin family.

Its function is as follows. Calmodulin mediates the control of a large number of enzymes, ion channels and other proteins by Ca(2+). Among the enzymes to be stimulated by the calmodulin-Ca(2+) complex are a number of protein kinases and phosphatases. This chain is Calmodulin, found in Renilla reniformis (Sea pansy).